The sequence spans 716 residues: Phenylalanine/tyrosine ammonia-lyase (716 aa).

The active-site Proton donor/acceptor is the tyrosine 110. The segment at residues 211–213 (ASG) is a cross-link (5-imidazolinone (Ala-Gly)). Serine 212 carries the 2,3-didehydroalanine (Ser) modification. Positions 270, 360, 366, 397, 468, 496, and 499 each coordinate (E)-cinnamate.

Belongs to the PAL/histidase family. As to quaternary structure, homotetramer. Dimer of dimers. In terms of processing, contains an active site 4-methylidene-imidazol-5-one (MIO), which is formed autocatalytically by cyclization and dehydration of residues Ala-Ser-Gly.

The protein localises to the cytoplasm. The catalysed reaction is L-phenylalanine = (E)-cinnamate + NH4(+). The enzyme catalyses L-tyrosine = (E)-4-coumarate + NH4(+). Its pathway is phenylpropanoid metabolism; trans-cinnamate biosynthesis; trans-cinnamate from L-phenylalanine: step 1/1. In terms of biological role, catalyzes the non-oxidative deamination of L-phenylalanine and L-tyrosine to form trans-cinnamic acid and p-coumaric acid respectively with similar efficiencies. Facilitates the commitment step in phenylpropanoid pathways that produce secondary metabolites such as lignins, coumarins and flavonoids. The sequence is that of Phenylalanine/tyrosine ammonia-lyase (PAL) from Rhodotorula toruloides (Yeast).